The following is a 178-amino-acid chain: Cytochrome b6-f complex iron-sulfur subunit 2 (178 aa).

The chain crosses the membrane as a helical span at residues 17 to 36 (LLNFFTGAIVATTASAAIYP). The Rieske domain maps to 61-161 (GHPIPASQIL…VQVKDDYIWI (101 aa)). [2Fe-2S] cluster contacts are provided by C107, H109, C125, and H128. The cysteines at positions 112 and 127 are disulfide-linked.

Belongs to the Rieske iron-sulfur protein family. As to quaternary structure, the 4 large subunits of the cytochrome b6-f complex are cytochrome b6, subunit IV (17 kDa polypeptide, PetD), cytochrome f and the Rieske protein, while the 4 small subunits are PetG, PetL, PetM and PetN. The complex functions as a dimer. [2Fe-2S] cluster is required as a cofactor.

The protein localises to the cellular thylakoid membrane. It catalyses the reaction 2 oxidized [plastocyanin] + a plastoquinol + 2 H(+)(in) = 2 reduced [plastocyanin] + a plastoquinone + 4 H(+)(out). In terms of biological role, component of the cytochrome b6-f complex, which mediates electron transfer between photosystem II (PSII) and photosystem I (PSI), cyclic electron flow around PSI, and state transitions. This is Cytochrome b6-f complex iron-sulfur subunit 2 from Nostoc sp. (strain PCC 7120 / SAG 25.82 / UTEX 2576).